Consider the following 236-residue polypeptide: Proteasome subunit alpha (236 aa).

The protein belongs to the peptidase T1A family. The 20S proteasome core is composed of 14 alpha and 14 beta subunits that assemble into four stacked heptameric rings, resulting in a barrel-shaped structure. The two inner rings, each composed of seven catalytic beta subunits, are sandwiched by two outer rings, each composed of seven alpha subunits. The catalytic chamber with the active sites is on the inside of the barrel. Has a gated structure, the ends of the cylinder being occluded by the N-termini of the alpha-subunits. Is capped by the proteasome-associated ATPase, ARC.

The protein localises to the cytoplasm. It functions in the pathway protein degradation; proteasomal Pup-dependent pathway. Its activity is regulated as follows. The formation of the proteasomal ATPase ARC-20S proteasome complex, likely via the docking of the C-termini of ARC into the intersubunit pockets in the alpha-rings, may trigger opening of the gate for substrate entry. Interconversion between the open-gate and close-gate conformations leads to a dynamic regulation of the 20S proteasome proteolysis activity. Its function is as follows. Component of the proteasome core, a large protease complex with broad specificity involved in protein degradation. This is Proteasome subunit alpha from Jonesia denitrificans (strain ATCC 14870 / DSM 20603 / BCRC 15368 / CIP 55.134 / JCM 11481 / NBRC 15587 / NCTC 10816 / Prevot 55134) (Listeria denitrificans).